Here is a 1526-residue protein sequence, read N- to C-terminus: MYQDSGCSSSSSRRGSSSAAAATSTAATAAETAAAAAATTTSSSDEETLETLTIITTTITDSDIHATTTTTTVIASGTATTAAAAATTATLATLATLASNSDIEDSSPVESEDSEECEYIEIDCQTTAQEGTSPSGGSSSSGNAVLLQRSSNNLQQQQQQQQQQQQHLQLQLQQADERLLRKIGYIASRVRCLSKYYGDFRLVNPYSARRQRRQLQEILLRHSIFDPGKEHQRAIVLAAATAAIAGPLAAIDCVCGSSSISLEAVSSRSRSSELEDDHHEQDQVQEEQEQEQHQGDTEDNEEEQEHPSEKPERTDIEEEPPPAIAVTTTTTATVRRKSSSSSTISGTATVSGSVSVSASASQSFCSNNINLLEELLIQFYEEQDHRSNLTVIRHHHHQQHQQHQQQQRITNNNNNNNNCNSIQNNNNMSNPAATAAATATPSVEQPATSGTTNIHLQPTSLPDGSDNPRRRRASDCSAVQAALQNQLHCITLKNNNCGKAMPFHRGSCGAAGEHLLAANSIANRATIILSKSCSNVDGDATATAATALSSTVGGGIGGIGGSIKMRASATDIETNALNGARDAIVASNNGNNGNNGNNGNNEYSILQLNNTIIQCHFNDDDFRALVKDLKRKVEYTERMNWLCLSKRPLGPPHRKSSLPKHQEVKRRFLEICDTTFSEEVRAALRLPAFDSYEWSDADVIHLMQTMFVELGFIEKFSIPVDTLREWLYEVYKHYNEVPFHNFRHCFCVAQMMYAITRQANLLSRLGDLECLILLVSCICHDLDHPGYNNIYQINARTELALRYNDISPLENHHCSIAFRLLEHPECNIFKNFSRDTFNNIREGIIRCILATDMARHNEILTQFMEITPIFDYSNRAHINLLCMILIKVADISNEARPMDVAEPWLDRLLQEFFAQSAAEKSEGLPVTPFMDPDKVSKPGSQVRFIGLVLLPLFEALGELVPELTELIIIPVRIALEYYRRLNDAQTKTRKSVADSNTSATSDSNSGTIDSNAAMVSTPGGASDKLSLDKGQGNSQGSGGGGGGGGGGGAGGGTGSGCGSNAAGSVSPQMPRSGSGISVKSRRSIPSQKSASRTSVDEPGGMASELHDLPEGSESGDSETATEVDVAEKTSKFKVDTEGSSNRSKSSHSTSRKSSREKRPSMIGELCSSGGGQRIRNSYGNIHGYHSNRCHFGNNRAVSLDQYSSAGNNRRLSDGLPQVISDSNVFYGRHNRSSTETTVAVGNPQDTNANTNHPVGCQLKELLARTEADSDGEGDGNGREDKKIPLVIPSMPQLATSSNGNISPTLVVTEQILPSNGSTRSSASSGRGGSGVPGGSGGSGMPGPSAGSGSSWKSRLRQFSDYFSFSFDKSNKRFGSTRSSPCPGSNSSSGRTNNNANGLGENQDGLGAGGGIKPGMCCTTITNSSGSTVKGETRGGTAGAGGGALTTMTTGNDAHQRHRAYSLDVPGMMRYSSNDSSRHPSNNTLQSAGGGAGLTTGLEVTAQRVPPSLSVEMGLASGSSSEAGPKI.

Residues 1–43 are compositionally biased toward low complexity; the sequence is MYQDSGCSSSSSRRGSSSAAAATSTAATAAETAAAAAATTTSS. 3 disordered regions span residues 1–48, 266–348, and 393–476; these read MYQD…DEET, SSRS…SGTA, and RHHH…ASDC. 2 stretches are compositionally biased toward basic and acidic residues: residues 270-282 and 305-314; these read RSSELEDDHHEQD and EHPSEKPERT. Low complexity-rich tracts occupy residues 324-348 and 401-440; these read IAVTTTTTATVRRKSSSSSTISGTA and QQHQQQQRITNNNNNNNNCNSIQNNNNMSNPAATAAATAT. A compositionally biased stretch (polar residues) spans 441 to 462; it reads PSVEQPATSGTTNIHLQPTSLP. The PDEase domain occupies 664-985; it reads VKRRFLEICD…EYYRRLNDAQ (322 aa). The active-site Proton donor is the histidine 740. Residue 740 to 744 participates in 3',5'-cyclic GMP binding; the sequence is HNFRH. Zn(2+)-binding residues include histidine 744, histidine 780, aspartate 781, and aspartate 890. Residues aspartate 781 and aspartate 890 each coordinate 3',5'-cyclic GMP. Aspartate 781 serves as a coordination point for Mg(2+). Disordered regions lie at residues 986–1170, 1265–1284, 1314–1351, 1372–1406, and 1469–1496; these read TKTR…SSGG, TEADSDGEGDGNGREDKKIP, SNGSTRSSASSGRGGSGVPGGSGGSGMPGPSAGSGSSW, RFGSTRSSPCPGSNSSSGRTNNNANGLGENQDGLG, and RYSSNDSSRHPSNNTLQSAGGGAGLTTG. Low complexity predominate over residues 993–1005; that stretch reads ADSNTSATSDSNS. Positions 1033 to 1057 are enriched in gly residues; the sequence is NSQGSGGGGGGGGGGGAGGGTGSGC. Residues 1065–1093 show a composition bias toward polar residues; it reads VSPQMPRSGSGISVKSRRSIPSQKSASRT. Positions 1125-1136 are enriched in basic and acidic residues; sequence VAEKTSKFKVDT. Positions 1139–1148 are enriched in low complexity; the sequence is SSNRSKSSHS. A compositionally biased stretch (low complexity) spans 1314–1324; sequence SNGSTRSSASS. Positions 1325–1340 are enriched in gly residues; sequence GRGGSGVPGGSGGSGM. Composition is skewed to low complexity over residues 1341–1350 and 1375–1397; these read PGPSAGSGSS and STRSSPCPGSNSSSGRTNNNANG. The segment covering 1470–1486 has biased composition (polar residues); it reads YSSNDSSRHPSNNTLQS.

This sequence belongs to the cyclic nucleotide phosphodiesterase family. PDE9 subfamily. Zn(2+) serves as cofactor. The cofactor is Mg(2+). In terms of tissue distribution, expressed in Malpighian tubules and adult fly head.

It catalyses the reaction 3',5'-cyclic GMP + H2O = GMP + H(+). Its pathway is purine metabolism; 3',5'-cyclic GMP degradation; GMP from 3',5'-cyclic GMP: step 1/1. Its function is as follows. Specifically hydrolyzes the second messenger cGMP, which is a key regulator of many important physiological processes. Highly specific: compared to other members of the cyclic nucleotide phosphodiesterase family, has the highest affinity and selectivity for cGMP. The polypeptide is High affinity cGMP-specific 3',5'-cyclic phosphodiesterase 9A (Drosophila melanogaster (Fruit fly)).